A 114-amino-acid polypeptide reads, in one-letter code: T cell receptor beta variable 5-1 (114 aa).

The signal sequence occupies residues 1–21 (MGSRLLCWVLLCLLGAGPVKA). The region spanning 22-114 (GVTQTPRYLI…SALYLCASSL (93 aa)) is the Ig-like domain. The cysteines at positions 42 and 110 are disulfide-linked. N-linked (GlcNAc...) asparagine glycosylation occurs at asparagine 96.

As to quaternary structure, alpha-beta TR is a heterodimer composed of an alpha and beta chain; disulfide-linked. The alpha-beta TR is associated with the transmembrane signaling CD3 coreceptor proteins to form the TR-CD3 (TcR or TCR). The assembly of alpha-beta TR heterodimers with CD3 occurs in the endoplasmic reticulum where a single alpha-beta TR heterodimer associates with one CD3D-CD3E heterodimer, one CD3G-CD3E heterodimer and one CD247 homodimer forming a stable octameric structure. CD3D-CD3E and CD3G-CD3E heterodimers preferentially associate with TR alpha and TR beta chains, respectively. The association of the CD247 homodimer is the last step of TcR assembly in the endoplasmic reticulum and is required for transport to the cell surface.

The protein localises to the cell membrane. V region of the variable domain of T cell receptor (TR) beta chain that participates in the antigen recognition. Alpha-beta T cell receptors are antigen specific receptors which are essential to the immune response and are present on the cell surface of T lymphocytes. Recognize peptide-major histocompatibility (MH) (pMH) complexes that are displayed by antigen presenting cells (APC), a prerequisite for efficient T cell adaptive immunity against pathogens. Binding of alpha-beta TR to pMH complex initiates TR-CD3 clustering on the cell surface and intracellular activation of LCK that phosphorylates the ITAM motifs of CD3G, CD3D, CD3E and CD247 enabling the recruitment of ZAP70. In turn ZAP70 phosphorylates LAT, which recruits numerous signaling molecules to form the LAT signalosome. The LAT signalosome propagates signal branching to three major signaling pathways, the calcium, the mitogen-activated protein kinase (MAPK) kinase and the nuclear factor NF-kappa-B (NF-kB) pathways, leading to the mobilization of transcription factors that are critical for gene expression and essential for T cell growth and differentiation. The T cell repertoire is generated in the thymus, by V-(D)-J rearrangement. This repertoire is then shaped by intrathymic selection events to generate a peripheral T cell pool of self-MH restricted, non-autoaggressive T cells. Post-thymic interaction of alpha-beta TR with the pMH complexes shapes TR structural and functional avidity. The polypeptide is T cell receptor beta variable 5-1 (Homo sapiens (Human)).